Reading from the N-terminus, the 47-residue chain is Conotoxin Cal6.18 (47 aa).

The N-terminal stretch at 1–19 (MKLTYVLIVAMLVLVVCRA) is a signal peptide.

Belongs to the conotoxin O1 superfamily. Post-translationally, may contain 3 disulfide bonds. Expressed by the venom duct.

The protein resides in the secreted. Functionally, probable neurotoxin. The sequence is that of Conotoxin Cal6.18 from Californiconus californicus (California cone).